The following is a 450-amino-acid chain: Phosphoglucosamine mutase 2 (450 aa).

Catalysis depends on serine 101, which acts as the Phosphoserine intermediate. Mg(2+) contacts are provided by serine 101, aspartate 245, aspartate 247, and aspartate 249. Phosphoserine is present on serine 101.

It belongs to the phosphohexose mutase family. Mg(2+) is required as a cofactor. Post-translationally, activated by phosphorylation.

The enzyme catalyses alpha-D-glucosamine 1-phosphate = D-glucosamine 6-phosphate. Catalyzes the conversion of glucosamine-6-phosphate to glucosamine-1-phosphate. This Shewanella sp. (strain MR-4) protein is Phosphoglucosamine mutase 2.